The following is a 360-amino-acid chain: Photosystem II protein D1 (360 aa).

Transmembrane regions (helical) follow at residues 29–46 (YIGWFGVLMIPTLLTATS), 118–133 (HFLLGVSCYIGREWEL), and 142–156 (WISVAFTAPVAAAAA). Chlorophyll a is bound at residue His118. Tyr126 contacts pheophytin a. The [CaMn4O5] cluster site is built by Asp170 and Glu189. Residues 197–218 (FHQLGVAGVFGGSLFSAMHGSL) form a helical membrane-spanning segment. Position 198 (His198) interacts with chlorophyll a. A quinone contacts are provided by residues His215 and 264–265 (SF). Residue His215 coordinates Fe cation. Position 272 (His272) interacts with Fe cation. The chain crosses the membrane as a helical span at residues 274-288 (FLGLWPVVGIWFTAM). Residues His332, Glu333, Asp342, and Ala344 each contribute to the [CaMn4O5] cluster site. The propeptide occupies 345–360 (SSNSLPVSLVAPSVNG).

This sequence belongs to the reaction center PufL/M/PsbA/D family. In terms of assembly, PSII is composed of 1 copy each of membrane proteins PsbA, PsbB, PsbC, PsbD, PsbE, PsbF, PsbH, PsbI, PsbJ, PsbK, PsbL, PsbM, PsbT, PsbX, PsbY, PsbZ, Psb30/Ycf12, at least 3 peripheral proteins of the oxygen-evolving complex and a large number of cofactors. It forms dimeric complexes. Requires The D1/D2 heterodimer binds P680, chlorophylls that are the primary electron donor of PSII, and subsequent electron acceptors. It shares a non-heme iron and each subunit binds pheophytin, quinone, additional chlorophylls, carotenoids and lipids. D1 provides most of the ligands for the Mn4-Ca-O5 cluster of the oxygen-evolving complex (OEC). There is also a Cl(-1) ion associated with D1 and D2, which is required for oxygen evolution. The PSII complex binds additional chlorophylls, carotenoids and specific lipids. as cofactor. In terms of processing, tyr-161 forms a radical intermediate that is referred to as redox-active TyrZ, YZ or Y-Z. Post-translationally, C-terminally processed by CTPA; processing is essential to allow assembly of the oxygen-evolving complex and thus photosynthetic growth.

It localises to the plastid. It is found in the chloroplast thylakoid membrane. It carries out the reaction 2 a plastoquinone + 4 hnu + 2 H2O = 2 a plastoquinol + O2. Functionally, photosystem II (PSII) is a light-driven water:plastoquinone oxidoreductase that uses light energy to abstract electrons from H(2)O, generating O(2) and a proton gradient subsequently used for ATP formation. It consists of a core antenna complex that captures photons, and an electron transfer chain that converts photonic excitation into a charge separation. The D1/D2 (PsbA/PsbD) reaction center heterodimer binds P680, the primary electron donor of PSII as well as several subsequent electron acceptors. This Gracilaria tenuistipitata var. liui (Red alga) protein is Photosystem II protein D1.